Here is a 102-residue protein sequence, read N- to C-terminus: YcgL domain-containing protein MS1047 (102 aa).

One can recognise a YcgL domain in the interval 1 to 85; the sequence is MLCAIYKSKK…KQESLFEQFK (85 aa).

This Mannheimia succiniciproducens (strain KCTC 0769BP / MBEL55E) protein is YcgL domain-containing protein MS1047.